Consider the following 278-residue polypeptide: uncharacterized protein (278 aa).

The Response regulatory domain occupies 1–55; the sequence is MKIRERFSMVDLPVLIITAAIIGHDKYKAFHAGANDILQKPYHYSEFMARIQNLI.

This is an uncharacterized protein from Bacillus subtilis (strain 168).